An 88-amino-acid chain; its full sequence is Exodeoxyribonuclease 7 small subunit (88 aa).

The segment at 68-88 is disordered; sequence SDPMHPDDGEPFDPSLVSTSQ.

The protein belongs to the XseB family. As to quaternary structure, heterooligomer composed of large and small subunits.

It localises to the cytoplasm. It carries out the reaction Exonucleolytic cleavage in either 5'- to 3'- or 3'- to 5'-direction to yield nucleoside 5'-phosphates.. Functionally, bidirectionally degrades single-stranded DNA into large acid-insoluble oligonucleotides, which are then degraded further into small acid-soluble oligonucleotides. In Xylella fastidiosa (strain 9a5c), this protein is Exodeoxyribonuclease 7 small subunit.